The sequence spans 498 residues: ATP synthase subunit beta, chloroplastic (498 aa).

ATP is bound at residue 172-179 (GGAGVGKT).

Belongs to the ATPase alpha/beta chains family. In terms of assembly, F-type ATPases have 2 components, CF(1) - the catalytic core - and CF(0) - the membrane proton channel. CF(1) has five subunits: alpha(3), beta(3), gamma(1), delta(1), epsilon(1). CF(0) has four main subunits: a(1), b(1), b'(1) and c(9-12).

The protein resides in the plastid. It is found in the chloroplast thylakoid membrane. The catalysed reaction is ATP + H2O + 4 H(+)(in) = ADP + phosphate + 5 H(+)(out). Produces ATP from ADP in the presence of a proton gradient across the membrane. The catalytic sites are hosted primarily by the beta subunits. This Atropa belladonna (Belladonna) protein is ATP synthase subunit beta, chloroplastic.